A 154-amino-acid chain; its full sequence is S-ribosylhomocysteine lyase (154 aa).

Residues His-57, His-61, and Cys-124 each contribute to the Fe cation site.

This sequence belongs to the LuxS family. Homodimer. It depends on Fe cation as a cofactor.

It catalyses the reaction S-(5-deoxy-D-ribos-5-yl)-L-homocysteine = (S)-4,5-dihydroxypentane-2,3-dione + L-homocysteine. In terms of biological role, involved in the synthesis of autoinducer 2 (AI-2) which is secreted by bacteria and is used to communicate both the cell density and the metabolic potential of the environment. The regulation of gene expression in response to changes in cell density is called quorum sensing. Catalyzes the transformation of S-ribosylhomocysteine (RHC) to homocysteine (HC) and 4,5-dihydroxy-2,3-pentadione (DPD). The protein is S-ribosylhomocysteine lyase of Exiguobacterium sibiricum (strain DSM 17290 / CCUG 55495 / CIP 109462 / JCM 13490 / 255-15).